A 321-amino-acid chain; its full sequence is o-succinylbenzoate synthase (321 aa).

The active-site Proton donor is lysine 134. Residues aspartate 162, glutamate 191, and aspartate 214 each coordinate Mg(2+). Lysine 236 functions as the Proton acceptor in the catalytic mechanism.

It belongs to the mandelate racemase/muconate lactonizing enzyme family. MenC type 1 subfamily. A divalent metal cation serves as cofactor.

The catalysed reaction is (1R,6R)-6-hydroxy-2-succinyl-cyclohexa-2,4-diene-1-carboxylate = 2-succinylbenzoate + H2O. The protein operates within quinol/quinone metabolism; 1,4-dihydroxy-2-naphthoate biosynthesis; 1,4-dihydroxy-2-naphthoate from chorismate: step 4/7. It functions in the pathway quinol/quinone metabolism; menaquinone biosynthesis. Its function is as follows. Converts 2-succinyl-6-hydroxy-2,4-cyclohexadiene-1-carboxylate (SHCHC) to 2-succinylbenzoate (OSB). This Klebsiella pneumoniae (strain 342) protein is o-succinylbenzoate synthase.